The following is a 62-amino-acid chain: Photosystem II reaction center protein Z (62 aa).

2 helical membrane-spanning segments follow: residues 8–28 (AVFA…VVFA) and 41–61 (FSGT…NSLI).

It belongs to the PsbZ family. As to quaternary structure, PSII is composed of 1 copy each of membrane proteins PsbA, PsbB, PsbC, PsbD, PsbE, PsbF, PsbH, PsbI, PsbJ, PsbK, PsbL, PsbM, PsbT, PsbY, PsbZ, Psb30/Ycf12, at least 3 peripheral proteins of the oxygen-evolving complex and a large number of cofactors. It forms dimeric complexes.

The protein resides in the plastid. The protein localises to the chloroplast thylakoid membrane. In terms of biological role, may control the interaction of photosystem II (PSII) cores with the light-harvesting antenna, regulates electron flow through the 2 photosystem reaction centers. PSII is a light-driven water plastoquinone oxidoreductase, using light energy to abstract electrons from H(2)O, generating a proton gradient subsequently used for ATP formation. This chain is Photosystem II reaction center protein Z, found in Morus indica (Mulberry).